We begin with the raw amino-acid sequence, 411 residues long: MSISFDLTIDDTRDQLARHARASLEAKPSLIGMSREEMAAALIAAGVPERQVKMRISQLWHWLYVRGVSDFADMRNISKDLRAMLAQHFTIARPEVVEEQISQDGTRKWLFRFPPRSAGRPVEIESVYIPEEGRGTLCISSQVGCTLTCSFCHTGTQKLVRNLTSEEILAQLLTARDRLGDFPDKDTPDGAMVPAEGRKITNIVMMGMGEPLYNFEEVKKALLIASDGDGLSLSKRRITLSTSGVVPEIYRTGDEIGVMLAISLHAVRDELRDILVPINKKYPLAELIKACREYPGLSNAKRITFEYVMLKDINDSLDDAKLLVKLLQGIPAKINLIPFNPWPGTNYQCSDWEQIEKFADYVNAAGYASPIRTPRGRDILAACGQLKSESERLRKSERLALEAMMIAGHGE.

The Proton acceptor role is filled by Glu-125. The Radical SAM core domain occupies 131-380 (EEGRGTLCIS…IRTPRGRDIL (250 aa)). Cys-138 and Cys-383 are joined by a disulfide. 3 residues coordinate [4Fe-4S] cluster: Cys-145, Cys-149, and Cys-152. S-adenosyl-L-methionine-binding positions include 209–210 (GE), Ser-241, 263–265 (SLH), and Asn-340. Cys-383 acts as the S-methylcysteine intermediate in catalysis.

It belongs to the radical SAM superfamily. RlmN family. Requires [4Fe-4S] cluster as cofactor.

The protein resides in the cytoplasm. The enzyme catalyses adenosine(2503) in 23S rRNA + 2 reduced [2Fe-2S]-[ferredoxin] + 2 S-adenosyl-L-methionine = 2-methyladenosine(2503) in 23S rRNA + 5'-deoxyadenosine + L-methionine + 2 oxidized [2Fe-2S]-[ferredoxin] + S-adenosyl-L-homocysteine. It catalyses the reaction adenosine(37) in tRNA + 2 reduced [2Fe-2S]-[ferredoxin] + 2 S-adenosyl-L-methionine = 2-methyladenosine(37) in tRNA + 5'-deoxyadenosine + L-methionine + 2 oxidized [2Fe-2S]-[ferredoxin] + S-adenosyl-L-homocysteine. In terms of biological role, specifically methylates position 2 of adenine 2503 in 23S rRNA and position 2 of adenine 37 in tRNAs. m2A2503 modification seems to play a crucial role in the proofreading step occurring at the peptidyl transferase center and thus would serve to optimize ribosomal fidelity. This chain is Dual-specificity RNA methyltransferase RlmN, found in Brucella melitensis biotype 2 (strain ATCC 23457).